Here is a 349-residue protein sequence, read N- to C-terminus: UDP-N-acetylenolpyruvoylglucosamine reductase (349 aa).

Residues F24–R197 form the FAD-binding PCMH-type domain. Residue R173 is part of the active site. The active-site Proton donor is the S249. Residue E345 is part of the active site.

It belongs to the MurB family. The cofactor is FAD.

Its subcellular location is the cytoplasm. The catalysed reaction is UDP-N-acetyl-alpha-D-muramate + NADP(+) = UDP-N-acetyl-3-O-(1-carboxyvinyl)-alpha-D-glucosamine + NADPH + H(+). It functions in the pathway cell wall biogenesis; peptidoglycan biosynthesis. Functionally, cell wall formation. The sequence is that of UDP-N-acetylenolpyruvoylglucosamine reductase from Burkholderia ambifaria (strain ATCC BAA-244 / DSM 16087 / CCUG 44356 / LMG 19182 / AMMD) (Burkholderia cepacia (strain AMMD)).